The following is a 247-amino-acid chain: Cobalt transport protein CbiM (247 aa).

The first 21 residues, 1 to 21 (MVGWGVLILLMVLWLPRQAYA), serve as a signal peptide directing secretion. A run of 7 helical transmembrane segments spans residues 27–47 (GYLPLGWCLFWAALCLPALIL), 64–84 (LVLALSAAFAFVLSALKLPSV), 96–116 (LGAVLFGPMAMSVVGCIILLF), 119–139 (LLLAHGGITTLGANTFSMAVV), 159–179 (GVAVFLAAALGDLSTYLTTSL), 181–201 (LALAFPAPIGGVASSFWKFAS), and 202–222 (IFAVTQVPLAVSEGLLTVIMV).

This sequence belongs to the CbiM family. In terms of assembly, forms an energy-coupling factor (ECF) transporter complex composed of an ATP-binding protein (A component, CbiO), a transmembrane protein (T component, CbiQ) and 2 possible substrate-capture proteins (S components, CbiM and CbiN) of unknown stoichimetry.

The protein resides in the cell membrane. Its pathway is cofactor biosynthesis; adenosylcobalamin biosynthesis. Its function is as follows. Part of the energy-coupling factor (ECF) transporter complex CbiMNOQ involved in cobalt import. This is Cobalt transport protein CbiM from Kyrpidia tusciae (strain DSM 2912 / NBRC 15312 / T2) (Bacillus tusciae).